The chain runs to 158 residues: Small ribosomal subunit protein uS7 (158 aa).

This sequence belongs to the universal ribosomal protein uS7 family. As to quaternary structure, part of the 30S ribosomal subunit. Contacts proteins S9 and S11.

Its function is as follows. One of the primary rRNA binding proteins, it binds directly to 16S rRNA where it nucleates assembly of the head domain of the 30S subunit. Is located at the subunit interface close to the decoding center, probably blocks exit of the E-site tRNA. This is Small ribosomal subunit protein uS7 from Gluconobacter oxydans (strain 621H) (Gluconobacter suboxydans).